The sequence spans 574 residues: Eukaryotic translation initiation factor 3 subunit D (574 aa).

Positions 153–178 (QRRGGNARQGQRGQGGRFGGDRPKER) are disordered. Positions 154-163 (RRGGNARQGQ) are enriched in low complexity. The interval 312–326 (PVETLTVSETSAEPP) is RNA gate. Positions 555–574 (EGTFDSERESSEEENSDDDQ) are disordered. Acidic residues predominate over residues 564–574 (SSEEENSDDDQ).

This sequence belongs to the eIF-3 subunit D family. As to quaternary structure, component of the eukaryotic translation initiation factor 3 (eIF-3) complex.

The protein localises to the cytoplasm. Its function is as follows. mRNA cap-binding component of the eukaryotic translation initiation factor 3 (eIF-3) complex, which is involved in protein synthesis of a specialized repertoire of mRNAs and, together with other initiation factors, stimulates binding of mRNA and methionyl-tRNAi to the 40S ribosome. The eIF-3 complex specifically targets and initiates translation of a subset of mRNAs involved in cell proliferation. In the eIF-3 complex, eif3d specifically recognizes and binds the 7-methylguanosine cap of a subset of mRNAs. This chain is Eukaryotic translation initiation factor 3 subunit D, found in Caenorhabditis briggsae.